The primary structure comprises 124 residues: Protein YebF (124 aa).

The first 27 residues, 1–27 (MKTCHIINRVGLSGVALLLTVSFTVSA), serve as a signal peptide directing secretion. A YebF/Cmi domain is found at 36 to 123 (KFISCDNLTK…QQNTISYSEL (88 aa)). Cys40 and Cys113 are joined by a disulfide.

The protein belongs to the YebF family.

The protein resides in the secreted. This chain is Protein YebF, found in Photorhabdus laumondii subsp. laumondii (strain DSM 15139 / CIP 105565 / TT01) (Photorhabdus luminescens subsp. laumondii).